The sequence spans 278 residues: Antiviral protein MAP (278 aa).

An N-terminal signal peptide occupies residues 1 to 28 (MLTTTKVFFLLLTTWITWYAIVNPQSRA). The cysteines at positions 64 and 248 are disulfide-linked. E196 is an active-site residue.

It catalyses the reaction Endohydrolysis of the N-glycosidic bond at one specific adenosine on the 28S rRNA.. Its function is as follows. Inhibits viral infection of plants, and protein synthesis in vitro. This Mirabilis jalapa (Garden four-o'clock) protein is Antiviral protein MAP.